We begin with the raw amino-acid sequence, 220 residues long: Nucleoside diphosphate kinase, mitochondrial (220 aa).

The N-terminal 57 residues, 1–57, are a transit peptide targeting the mitochondrion; sequence MFSRFARAFPKILASGASQRTFATVQKAFANPTSKKLIVGSSLLIGSAFATTSFVAC. ATP is bound by residues Lys80, Phe128, Arg156, Thr162, Arg173, and Asn183. His186 (pros-phosphohistidine intermediate) is an active-site residue.

It belongs to the NDK family. Mg(2+) is required as a cofactor.

Its subcellular location is the mitochondrion intermembrane space. The catalysed reaction is a 2'-deoxyribonucleoside 5'-diphosphate + ATP = a 2'-deoxyribonucleoside 5'-triphosphate + ADP. The enzyme catalyses a ribonucleoside 5'-diphosphate + ATP = a ribonucleoside 5'-triphosphate + ADP. Functionally, major role in the synthesis of nucleoside triphosphates other than ATP. The ATP gamma phosphate is transferred to the NDP beta phosphate via a ping-pong mechanism, using a phosphorylated active-site intermediate. In Dictyostelium discoideum (Social amoeba), this protein is Nucleoside diphosphate kinase, mitochondrial (ndkM).